We begin with the raw amino-acid sequence, 296 residues long: SPbeta prophage-derived endonuclease YokF (296 aa).

The signal sequence occupies residues 1–19 (MKKVLLGFAAFTLSLSLAA). Cysteine 20 carries N-palmitoyl cysteine lipidation. A lipid anchor (S-diacylglycerol cysteine) is attached at cysteine 20. Residues 20-65 (CSSNDSEKVSTEKETPQASTDVEKKTEQKESTKEKTADKSKEKDKK) are disordered. Residues 24-65 (DSEKVSTEKETPQASTDVEKKTEQKESTKEKTADKSKEKDKK) show a composition bias toward basic and acidic residues. Positions 66-199 (ELVDVTLDRA…KSEKLSIWSK (134 aa)) constitute a TNase-like domain. Residue aspartate 79 coordinates Ca(2+). Arginine 93 is an active-site residue. The Ca(2+) site is built by aspartate 98 and threonine 99. Catalysis depends on residues glutamate 101 and arginine 144. Residues 218–296 (AVKKATTSKP…RDHDNYACER (79 aa)) are disordered. The span at 219-244 (VKKATTSKPAATQPTTPKASSETSTT) shows a compositional bias: low complexity. Residues 284 to 296 (KMDRDHDNYACER) show a composition bias toward basic and acidic residues.

Ca(2+) serves as cofactor. The cofactor is Cu(2+). It depends on Mn(2+) as a cofactor.

The protein localises to the cell membrane. Its activity is regulated as follows. Inhibited by aurintricalboxylic acid but not by Zn(2+), Mn(2+), Hg(2+), 2-mercaptoethanol and sodium citrate. Neither inhibited nor activated by ATP. Its function is as follows. Catalyzes the hydrolysis of supercoiled double and single strand DNA and RNA. Involved in chromosomal DNA degradation and cell death caused by thermal stress. This chain is SPbeta prophage-derived endonuclease YokF (yokF), found in Bacillus subtilis (strain 168).